A 176-amino-acid chain; its full sequence is RNA pyrophosphohydrolase (176 aa).

The Nudix hydrolase domain occupies 6-149 (GYRPNVGIVI…KRDVYRRVMK (144 aa)). A Nudix box motif is present at residues 38-59 (GGINPGESPEQAMYRELFEEVG).

Belongs to the Nudix hydrolase family. RppH subfamily. It depends on a divalent metal cation as a cofactor.

Its function is as follows. Accelerates the degradation of transcripts by removing pyrophosphate from the 5'-end of triphosphorylated RNA, leading to a more labile monophosphorylated state that can stimulate subsequent ribonuclease cleavage. The polypeptide is RNA pyrophosphohydrolase (Proteus mirabilis (strain HI4320)).